A 418-amino-acid polypeptide reads, in one-letter code: Tyrosine--tRNA ligase (418 aa).

A 'HIGH' region motif is present at residues 42–51 (PTAPDLHLGH). The short motif at 226-230 (KMSKS) is the 'KMSKS' region element. Lys-229 contributes to the ATP binding site. The region spanning 339-400 (VRLVALLTKS…GKRNFAKVRL (62 aa)) is the S4 RNA-binding domain.

It belongs to the class-I aminoacyl-tRNA synthetase family. TyrS type 2 subfamily. Homodimer.

The protein localises to the cytoplasm. It carries out the reaction tRNA(Tyr) + L-tyrosine + ATP = L-tyrosyl-tRNA(Tyr) + AMP + diphosphate + H(+). In terms of biological role, catalyzes the attachment of tyrosine to tRNA(Tyr) in a two-step reaction: tyrosine is first activated by ATP to form Tyr-AMP and then transferred to the acceptor end of tRNA(Tyr). This Xylella fastidiosa (strain 9a5c) protein is Tyrosine--tRNA ligase.